The chain runs to 407 residues: MSRYVFTSESVTEGHPDKICDQVSDAVLDALLAQDPASRVACETVVNTGLCIITGEVTTTARVDFNTLVRGVIADIGYSSAKAGGFDANSCAVLVALDQQSPDIAQGVDEADDHAGDPLDKVGAGDQGIMFGYACDETPELMPLPISLAHRLARRLAEVRHNGTLGYLLPDGKTQVSVVYEDDQPVAIDTILISTQHIAEIDGISDEKGLRERISADLWTHVVEPATADLSLKPSKDTTKYLVNPTGKFVVGGPQGDAGLTGRKIIVDTYGGYARHGGGAFSGKDPTKVDRSAAYAARFVAKALVAAGLARKAEVQLSYAIGVAKPVSILVESFGTSSHSNDELTELVNANFDLRPGAIIENFKLRNLPQQRGGNFYREVAAYGHFGRSDLNLPWEDVSVIAAKLKG.

His15 is a binding site for ATP. Residue Asp17 participates in Mg(2+) binding. Glu43 contacts K(+). Positions 56 and 100 each coordinate L-methionine. Residues 100 to 110 form a flexible loop region; the sequence is QSPDIAQGVDE. ATP-binding positions include 171–173, 248–249, Asp257, 263–264, Ala280, and Lys284; these read DGK, KF, and RK. Asp257 is an L-methionine binding site. L-methionine is bound at residue Lys288.

Belongs to the AdoMet synthase family. In terms of assembly, homotetramer; dimer of dimers. The cofactor is Mg(2+). K(+) is required as a cofactor.

Its subcellular location is the cytoplasm. The catalysed reaction is L-methionine + ATP + H2O = S-adenosyl-L-methionine + phosphate + diphosphate. It participates in amino-acid biosynthesis; S-adenosyl-L-methionine biosynthesis; S-adenosyl-L-methionine from L-methionine: step 1/1. Its function is as follows. Catalyzes the formation of S-adenosylmethionine (AdoMet) from methionine and ATP. The overall synthetic reaction is composed of two sequential steps, AdoMet formation and the subsequent tripolyphosphate hydrolysis which occurs prior to release of AdoMet from the enzyme. The chain is S-adenosylmethionine synthase from Synechococcus sp. (strain RCC307).